A 132-amino-acid polypeptide reads, in one-letter code: MSRKRTSPNRNVQIADQIQRDLSELIMREVKDPRIGIVTIQSVELTPDYAHAKVYFTALTGDPDKTQEALNHASGHLHNLLFKRLHIHTVPTLHFHYDQTIEKAVEMSRLIKEANSTRAKDDDEAGAPAKDD.

The protein belongs to the RbfA family. In terms of assembly, monomer. Binds 30S ribosomal subunits, but not 50S ribosomal subunits or 70S ribosomes.

The protein localises to the cytoplasm. Its function is as follows. One of several proteins that assist in the late maturation steps of the functional core of the 30S ribosomal subunit. Associates with free 30S ribosomal subunits (but not with 30S subunits that are part of 70S ribosomes or polysomes). Required for efficient processing of 16S rRNA. May interact with the 5'-terminal helix region of 16S rRNA. The sequence is that of Ribosome-binding factor A from Burkholderia cenocepacia (strain ATCC BAA-245 / DSM 16553 / LMG 16656 / NCTC 13227 / J2315 / CF5610) (Burkholderia cepacia (strain J2315)).